Consider the following 276-residue polypeptide: Pantothenate synthetase (276 aa).

ATP is bound at residue 26 to 33 (MGFLHEGH). The active-site Proton donor is the histidine 33. Glutamine 57 is a binding site for (R)-pantoate. A beta-alanine-binding site is contributed by glutamine 57. 142 to 145 (GLKD) lines the ATP pocket. Glutamine 148 serves as a coordination point for (R)-pantoate. ATP contacts are provided by residues isoleucine 171 and 179 to 182 (KSSR).

This sequence belongs to the pantothenate synthetase family. In terms of assembly, homodimer.

The protein resides in the cytoplasm. It carries out the reaction (R)-pantoate + beta-alanine + ATP = (R)-pantothenate + AMP + diphosphate + H(+). The protein operates within cofactor biosynthesis; (R)-pantothenate biosynthesis; (R)-pantothenate from (R)-pantoate and beta-alanine: step 1/1. In terms of biological role, catalyzes the condensation of pantoate with beta-alanine in an ATP-dependent reaction via a pantoyl-adenylate intermediate. The protein is Pantothenate synthetase of Exiguobacterium sibiricum (strain DSM 17290 / CCUG 55495 / CIP 109462 / JCM 13490 / 255-15).